Reading from the N-terminus, the 767-residue chain is Syn-copalyl diphosphate synthase, chloroplastic (767 aa).

The transit peptide at 1–47 (MPVFTASFQCVTLFGQPASAADAQPLLQGQRPFLHLHARRRRPCGPM) directs the protein to the chloroplast. A disordered region spans residues 45-74 (GPMLISKSPPYPASEETREWEADGQHEHTD). The span at 59–74 (EETREWEADGQHEHTD) shows a compositional bias: basic and acidic residues. Lys233 is a substrate binding site. The Mg(2+) site is built by Asp365 and Asp367. Residues 365–368 (DIDD) carry the DXDD motif motif. Lys453 lines the substrate pocket.

It belongs to the terpene synthase family. Mg(2+) serves as cofactor.

It localises to the plastid. It is found in the chloroplast. It catalyses the reaction (2E,6E,10E)-geranylgeranyl diphosphate = 9alpha-copalyl diphosphate. Its function is as follows. Catalyzes the conversion of geranylgeranyl diphosphate to the phytoalexin precursor syn-copalyl diphosphate. Required for the biosynthesis of momilactones that exude from roots and act as allelochemicals against lowland weeds in paddy soil. This chain is Syn-copalyl diphosphate synthase, chloroplastic, found in Oryza sativa subsp. japonica (Rice).